Consider the following 362-residue polypeptide: Malate dehydrogenase (362 aa).

The protein belongs to the LDH2/MDH2 oxidoreductase family. As to quaternary structure, homodimer.

Its subcellular location is the cytoplasm. The catalysed reaction is (S)-malate + NAD(+) = oxaloacetate + NADH + H(+). The polypeptide is Malate dehydrogenase (mdh) (Pyrococcus abyssi (strain GE5 / Orsay)).